The primary structure comprises 90 residues: DNA-binding protein HU-beta (90 aa).

This sequence belongs to the bacterial histone-like protein family. As to quaternary structure, heterodimer of an alpha and a beta chain.

Functionally, histone-like DNA-binding protein which is capable of wrapping DNA to stabilize it, and thus to prevent its denaturation under extreme environmental conditions. The chain is DNA-binding protein HU-beta (hupB) from Salmonella typhi.